The chain runs to 757 residues: Chloride channel protein C (757 aa).

Topologically, residues 1–96 (MGSSLNKPLS…LHLKKTFGKW (96 aa)) are cytoplasmic. A run of 11 helical transmembrane segments spans residues 97–117 (IICL…KMVV), 141–161 (FLTF…MVIV), 196–216 (IVSL…GPMI), 253–273 (FISI…IGGV), 292–312 (TFFT…GIGS), 337–357 (LLCF…FVFL), 378–398 (FEAL…SFIF), 462–482 (LLVF…LWVA), 484–504 (GLFV…GQTI), 506–526 (MWFT…AMMA), and 535–555 (IVVI…IILA). CBS domains follow at residues 600-667 (MSKN…TGEE) and 710-757 (MNSS…NDLF).

Belongs to the chloride channel (TC 2.A.49) family.

The protein resides in the membrane. Voltage-gated chloride channel. Chloride channels may have several functions including the regulation of cell volume, membrane potential stabilization and signal transduction. The sequence is that of Chloride channel protein C (clcC) from Dictyostelium discoideum (Social amoeba).